Reading from the N-terminus, the 591-residue chain is NADP-dependent malic enzyme (591 aa).

Residues 1–10 (MESTLKEMRD) show a composition bias toward basic and acidic residues. The disordered stretch occupies residues 1 to 26 (MESTLKEMRDGASVLDMDPKSTVGGG). The active-site Proton donor is the tyrosine 139. Arginine 192 provides a ligand contact to NAD(+). The Proton acceptor role is filled by lysine 210. A divalent metal cation-binding residues include glutamate 282, aspartate 283, and aspartate 306. Aspartate 306 lines the NAD(+) pocket. 335–351 (LFLGAGEAGTGIAELIA) serves as a coordination point for NADP(+). Position 447 (asparagine 447) interacts with NAD(+).

It belongs to the malic enzymes family. As to quaternary structure, homotetramer. Mg(2+) serves as cofactor. It depends on Mn(2+) as a cofactor. In terms of tissue distribution, mRNA found twofold higher in leaves and stems than in roots.

It localises to the cytoplasm. The catalysed reaction is (S)-malate + NADP(+) = pyruvate + CO2 + NADPH. It catalyses the reaction oxaloacetate + H(+) = pyruvate + CO2. The polypeptide is NADP-dependent malic enzyme (Populus trichocarpa (Western balsam poplar)).